Consider the following 349-residue polypeptide: Ferredoxin--NADP reductase 1 (349 aa).

FAD is bound by residues glutamate 36, lysine 44, tyrosine 48, valine 88, leucine 123, aspartate 290, and serine 331.

The protein belongs to the ferredoxin--NADP reductase type 2 family. As to quaternary structure, homodimer. FAD serves as cofactor.

It carries out the reaction 2 reduced [2Fe-2S]-[ferredoxin] + NADP(+) + H(+) = 2 oxidized [2Fe-2S]-[ferredoxin] + NADPH. The polypeptide is Ferredoxin--NADP reductase 1 (Bacillus cereus (strain ATCC 10987 / NRS 248)).